The chain runs to 202 residues: Type II restriction enzyme MthZI (202 aa).

The catalysed reaction is Endonucleolytic cleavage of DNA to give specific double-stranded fragments with terminal 5'-phosphates.. A P subtype restriction enzyme that recognizes the double-stranded sequence 5'-CTAG-3' and cleaves after C-1. The protein is Type II restriction enzyme MthZI of Methanothermobacter thermautotrophicus (Methanobacterium thermoformicicum).